We begin with the raw amino-acid sequence, 329 residues long: Thiamine thiazole synthase (329 aa).

Substrate is bound by residues C86, 107–108 (EA), G115, and V180. 2,3-didehydroalanine (Cys) is present on C218. Substrate is bound by residues D220, H235, M287, and 297–299 (RMG).

Belongs to the THI4 family. As to quaternary structure, homooctamer. Fe cation serves as cofactor. Post-translationally, during the catalytic reaction, a sulfide is transferred from Cys-218 to a reaction intermediate, generating a dehydroalanine residue.

It is found in the cytoplasm. It localises to the nucleus. It catalyses the reaction [ADP-thiazole synthase]-L-cysteine + glycine + NAD(+) = [ADP-thiazole synthase]-dehydroalanine + ADP-5-ethyl-4-methylthiazole-2-carboxylate + nicotinamide + 3 H2O + 2 H(+). Involved in biosynthesis of the thiamine precursor thiazole. Catalyzes the conversion of NAD and glycine to adenosine diphosphate 5-(2-hydroxyethyl)-4-methylthiazole-2-carboxylic acid (ADT), an adenylated thiazole intermediate. The reaction includes an iron-dependent sulfide transfer from a conserved cysteine residue of the protein to a thiazole intermediate. The enzyme can only undergo a single turnover, which suggests it is a suicide enzyme. May have additional roles in adaptation to various stress conditions and in DNA damage tolerance. The protein is Thiamine thiazole synthase of Phaeosphaeria nodorum (strain SN15 / ATCC MYA-4574 / FGSC 10173) (Glume blotch fungus).